The following is a 64-amino-acid chain: Large ribosomal subunit protein bL35 (64 aa).

The protein belongs to the bacterial ribosomal protein bL35 family.

This is Large ribosomal subunit protein bL35 from Micrococcus luteus (strain ATCC 4698 / DSM 20030 / JCM 1464 / CCM 169 / CCUG 5858 / IAM 1056 / NBRC 3333 / NCIMB 9278 / NCTC 2665 / VKM Ac-2230) (Micrococcus lysodeikticus).